Reading from the N-terminus, the 427-residue chain is 3-phosphoshikimate 1-carboxyvinyltransferase (427 aa).

Residues Lys20, Ser21, and Arg25 each contribute to the 3-phosphoshikimate site. Lys20 contributes to the phosphoenolpyruvate binding site. Residues Gly92 and Arg120 each coordinate phosphoenolpyruvate. Ser166, Gln168, Asp312, and Lys339 together coordinate 3-phosphoshikimate. Position 168 (Gln168) interacts with phosphoenolpyruvate. Asp312 (proton acceptor) is an active-site residue. Phosphoenolpyruvate contacts are provided by Arg343 and Arg385.

It belongs to the EPSP synthase family. In terms of assembly, monomer.

The protein resides in the cytoplasm. The enzyme catalyses 3-phosphoshikimate + phosphoenolpyruvate = 5-O-(1-carboxyvinyl)-3-phosphoshikimate + phosphate. Its pathway is metabolic intermediate biosynthesis; chorismate biosynthesis; chorismate from D-erythrose 4-phosphate and phosphoenolpyruvate: step 6/7. Functionally, catalyzes the transfer of the enolpyruvyl moiety of phosphoenolpyruvate (PEP) to the 5-hydroxyl of shikimate-3-phosphate (S3P) to produce enolpyruvyl shikimate-3-phosphate and inorganic phosphate. The polypeptide is 3-phosphoshikimate 1-carboxyvinyltransferase (Streptococcus equi subsp. equi (strain 4047)).